The primary structure comprises 592 residues: Arginine--tRNA ligase (592 aa).

A 'HIGH' region motif is present at residues 128 to 138 (ANPTGPLHVGH).

It belongs to the class-I aminoacyl-tRNA synthetase family. In terms of assembly, monomer.

It is found in the cytoplasm. The catalysed reaction is tRNA(Arg) + L-arginine + ATP = L-arginyl-tRNA(Arg) + AMP + diphosphate. This Hydrogenovibrio crunogenus (strain DSM 25203 / XCL-2) (Thiomicrospira crunogena) protein is Arginine--tRNA ligase.